A 20-amino-acid polypeptide reads, in one-letter code: Short cationic peptide-3a (20 aa).

Residue glutamate 20 is modified to Glutamic acid 1-amide.

In terms of tissue distribution, expressed by the venom gland.

It localises to the secreted. In Cupiennius salei (American wandering spider), this protein is Short cationic peptide-3a.